The sequence spans 86 residues: UPF0367 protein PMN2A_1492 (86 aa).

The protein belongs to the UPF0367 family.

This Prochlorococcus marinus (strain NATL2A) protein is UPF0367 protein PMN2A_1492.